The following is a 107-amino-acid chain: Mitochondrial pyruvate carrier 1 (107 aa).

The next 2 helical transmembrane spans lie at 18–39 (YFMS…AALA) and 52–68 (MTLA…RFAY).

The protein belongs to the mitochondrial pyruvate carrier (MPC) (TC 2.A.105) family. The functional 150 kDa pyruvate import complex is a heteromer of MPC1 and MPC2.

It localises to the mitochondrion inner membrane. Functionally, mediates the uptake of pyruvate into mitochondria. The chain is Mitochondrial pyruvate carrier 1 (Mpc1) from Drosophila melanogaster (Fruit fly).